Reading from the N-terminus, the 65-residue chain is Hirudin-3B (65 aa).

The interaction with thrombin active site stretch occupies residues 1-3 (VVY). 3 disulfides stabilise this stretch: Cys-6–Cys-14, Cys-16–Cys-28, and Cys-22–Cys-39. Positions 40-65 (VTGEGTPKPQSHNDGDFEEIPEEYLQ) are disordered. The O-linked (GalNAc...) threonine glycan is linked to Thr-45. An interaction with fibrinogen-binding exosite of thrombin region spans residues 55–65 (DFEEIPEEYLQ). Acidic residues predominate over residues 55 to 65 (DFEEIPEEYLQ). Sulfotyrosine is present on Tyr-63.

This sequence belongs to the protease inhibitor I14 (hirudin) family.

The protein localises to the secreted. Its function is as follows. Hirudin is a potent thrombin-specific protease inhibitor. It forms a stable non-covalent complex with alpha-thrombin, thereby abolishing its ability to cleave fibrinogen. The sequence is that of Hirudin-3B from Hirudo medicinalis (Medicinal leech).